The chain runs to 308 residues: NAD-dependent protein deacylase SIR4 (308 aa).

Residues 1–16 (MAATKLHPALRNAIRA) constitute a mitochondrion transit peptide. The 281-residue stretch at 28–308 (TFDVQEGIKL…EVLPAALRQL (281 aa)) folds into the Deacetylase sirtuin-type domain. Residues 53–73 (GAGI…RPPH) and 129–132 (QNVD) each bind NAD(+). His147 acts as the Proton acceptor in catalysis. Cys155, Cys158, Cys211, and Cys214 together coordinate Zn(2+). NAD(+) contacts are provided by residues 251–253 (GTS), 277–279 (NSG), and Ile297.

Belongs to the sirtuin family. Class II subfamily. Requires Zn(2+) as cofactor.

Its subcellular location is the mitochondrion matrix. The catalysed reaction is N(6)-acetyl-L-lysyl-[protein] + NAD(+) + H2O = 2''-O-acetyl-ADP-D-ribose + nicotinamide + L-lysyl-[protein]. Functionally, NAD-dependent protein deacylase. Catalyzes the NAD-dependent hydrolysis of acyl groups from lysine residues. The polypeptide is NAD-dependent protein deacylase SIR4 (Monosiga brevicollis (Choanoflagellate)).